Here is a 681-residue protein sequence, read N- to C-terminus: DNA-directed RNA polymerase subunit beta' (681 aa).

Zn(2+)-binding residues include cysteine 69, cysteine 71, cysteine 87, and cysteine 90. 3 residues coordinate Mg(2+): aspartate 489, aspartate 491, and aspartate 493.

This sequence belongs to the RNA polymerase beta' chain family. RpoC1 subfamily. As to quaternary structure, in plastids the minimal PEP RNA polymerase catalytic core is composed of four subunits: alpha, beta, beta', and beta''. When a (nuclear-encoded) sigma factor is associated with the core the holoenzyme is formed, which can initiate transcription. Mg(2+) serves as cofactor. Zn(2+) is required as a cofactor.

It localises to the plastid. The protein localises to the chloroplast. It carries out the reaction RNA(n) + a ribonucleoside 5'-triphosphate = RNA(n+1) + diphosphate. Its function is as follows. DNA-dependent RNA polymerase catalyzes the transcription of DNA into RNA using the four ribonucleoside triphosphates as substrates. This Nicotiana tomentosiformis (Tobacco) protein is DNA-directed RNA polymerase subunit beta'.